A 321-amino-acid chain; its full sequence is Dolichyl N-acetyl-alpha-D-glucosaminyl phosphate 3-beta-D-2,3-diacetamido-2,3-dideoxy-beta-D-glucuronosyltransferase (321 aa).

The next 2 membrane-spanning stretches (helical) occupy residues 252 to 272 (FGFL…FIYI) and 290 to 310 (LYIA…YGFF).

Belongs to the glycosyltransferase 2 family.

It localises to the cell membrane. It catalyses the reaction an archaeal dolichyl N-acetyl-alpha-D-glucosaminyl phosphate + UDP-2,3-diacetamido-2,3-dideoxy-alpha-D-glucuronate = an archaeal dolichyl 3-O-(2,3-diacetamido-2,3-dideoxy- beta-D-glucuronosyl)-N-acetyl- alpha-D-glucosaminyl phosphate + UDP + H(+). The protein operates within cell surface structure biogenesis; S-layer biogenesis. It functions in the pathway protein modification; protein glycosylation. Its function is as follows. Involved in the assembly of an N-linked disaccharide that decorates the S-layer glycoprotein and flagellins. AglC catalyzes the transfer of 2,3-diacetamido-2,3-dideoxy-alpha-D-glucuronic acid (Glc-2,3-diNAcA) from uridine 5'-diphospho 2,3-diacetamido-2,3-dideoxy-alpha-D-glucuronic acid (UDP-Glc-2,3-diNAcA) to the AglK product Dol-P-GlcNAc to yield Dol-P-GlcNAc-Glc-2,3-diNAcA. AglC is specific for the monophosphate-linked Dol-P-GlcNAc. This chain is Dolichyl N-acetyl-alpha-D-glucosaminyl phosphate 3-beta-D-2,3-diacetamido-2,3-dideoxy-beta-D-glucuronosyltransferase, found in Methanococcus voltae.